A 339-amino-acid chain; its full sequence is Homocysteine S-methyltransferase 2 (339 aa).

The 315-residue stretch at 12 to 326 (AVRRWVDAAG…NTIRAIHRTL (315 aa)) folds into the Hcy-binding domain. Zn(2+) is bound by residues Cys244, Cys311, and Cys312.

In terms of assembly, monomer. Zn(2+) serves as cofactor.

It carries out the reaction S-methyl-L-methionine + L-homocysteine = 2 L-methionine + H(+). Functionally, catalyzes methyl transfer from S-methylmethionine (SMM) to adenosyl-L-homocysteine (AdoMet). SMM degradation (by HMT-1, HMT-2, HMT-3 and HMT-4) and biosynthesis (by MMT1) constitute the SMM cycle in plants, which is probably required to achieve short term control of AdoMet level. This is Homocysteine S-methyltransferase 2 (HMT-2) from Zea mays (Maize).